We begin with the raw amino-acid sequence, 123 residues long: Snaclec GPIB-binding protein subunit beta (123 aa).

Disulfide bonds link Cys2/Cys13, Cys30/Cys119, and Cys96/Cys111. In terms of domain architecture, C-type lectin spans 9-120; it reads YGGHCYKLFK…CTRLQYFVCE (112 aa).

The protein belongs to the snaclec family. As to quaternary structure, heterodimer of subunits alpha and beta; disulfide-linked. As to expression, expressed by the venom gland.

The protein resides in the secreted. In terms of biological role, binds to platelet GPIb (subunit alpha) (GP1BA) and functions as a receptor blocker for vWF binding to GPIb. The platelet GPIb-binding site resides on the GPIB-BP subunit beta and not on the alpha subunit. At a final concentration of 104 nM totally abolishes vWF-dependent shear-induced platelet aggregation (SIPA) at a high shear stress, but had no effect on SIPA at a low shear stress. This Bothrops jararaca (Jararaca) protein is Snaclec GPIB-binding protein subunit beta.